The sequence spans 293 residues: MDLPGPRWKKGKDGKDFASLAAANPMSAIVSELKASFISSKPVAILSGPGGSAVLGVGPEQAVILNRAAFGHAIENATAQKHWFQLSPEEVFYLCHALNCIRVDSLDNKQMSEIELWDYFRSGSESFPEMYKAYAHLRLKNWVVRSGLQYGADFVAYRHHPALVHSEFAVVVVPEGAEFGNRCGRLEVWSDLLCALRASGSVAKTLLVLTISSSSKCELSSPDCLEQLVVHERTITRWILQQCREQRCEPSRDEVNREELIIEKESVVFNHWGVILGFTVLSGLLVYRLKFRQ.

Catalysis depends on residues Y157, H165, and K204. The chain crosses the membrane as a helical span at residues V267–Y287.

The protein belongs to the tRNA-intron endonuclease family. TRNA splicing endonuclease is a heterotetramer composed of SEN2, SEN15, SEN34/LENG5 and SEN54.

The protein localises to the nucleus. Its subcellular location is the membrane. The catalysed reaction is pretRNA = a 3'-half-tRNA molecule with a 5'-OH end + a 5'-half-tRNA molecule with a 2',3'-cyclic phosphate end + an intron with a 2',3'-cyclic phosphate and a 5'-hydroxyl terminus.. Its function is as follows. Constitutes one of the two catalytic subunit of the tRNA-splicing endonuclease complex, a complex responsible for identification and cleavage of the splice sites in pre-tRNA. It cleaves pre-tRNA at the 5'- and 3'-splice sites to release the intron. The products are an intron and two tRNA half-molecules bearing 2',3'-cyclic phosphate and 5'-OH termini. There are no conserved sequences at the splice sites, but the intron is invariably located at the same site in the gene, placing the splice sites an invariant distance from the constant structural features of the tRNA body. Probably carries the active site for 5'-splice site cleavage. This is Probable tRNA-splicing endonuclease subunit Sen2 from Oryza sativa subsp. japonica (Rice).